The sequence spans 368 residues: tRNA-specific 2-thiouridylase MnmA (368 aa).

ATP is bound by residues 11 to 18 and Met-37; that span reads GMSGGVDS. The segment at 97 to 99 is interaction with target base in tRNA; it reads NPD. Cys-102 (nucleophile) is an active-site residue. Residues Cys-102 and Cys-199 are joined by a disulfide bond. ATP is bound at residue Gly-127. An interaction with tRNA region spans residues 149-151; the sequence is KDQ. Cys-199 (cysteine persulfide intermediate) is an active-site residue. Positions 311–312 are interaction with tRNA; that stretch reads RY.

It belongs to the MnmA/TRMU family. As to quaternary structure, interacts with TusE.

The protein localises to the cytoplasm. The catalysed reaction is S-sulfanyl-L-cysteinyl-[protein] + uridine(34) in tRNA + AH2 + ATP = 2-thiouridine(34) in tRNA + L-cysteinyl-[protein] + A + AMP + diphosphate + H(+). In terms of biological role, catalyzes the 2-thiolation of uridine at the wobble position (U34) of tRNA(Lys), tRNA(Glu) and tRNA(Gln), leading to the formation of s(2)U34, the first step of tRNA-mnm(5)s(2)U34 synthesis. Sulfur is provided by IscS, via a sulfur-relay system. Binds ATP and its substrate tRNAs. The sequence is that of tRNA-specific 2-thiouridylase MnmA from Salmonella choleraesuis (strain SC-B67).